A 397-amino-acid chain; its full sequence is Transaldolase (397 aa).

Lysine 136 serves as the catalytic Schiff-base intermediate with substrate.

The protein belongs to the transaldolase family. Type 1 subfamily. In terms of assembly, homodimer.

The protein localises to the cytoplasm. The enzyme catalyses D-sedoheptulose 7-phosphate + D-glyceraldehyde 3-phosphate = D-erythrose 4-phosphate + beta-D-fructose 6-phosphate. It functions in the pathway carbohydrate degradation; pentose phosphate pathway; D-glyceraldehyde 3-phosphate and beta-D-fructose 6-phosphate from D-ribose 5-phosphate and D-xylulose 5-phosphate (non-oxidative stage): step 2/3. Its function is as follows. Transaldolase is important for the balance of metabolites in the pentose-phosphate pathway. The protein is Transaldolase of Synechococcus sp. (strain ATCC 27144 / PCC 6301 / SAUG 1402/1) (Anacystis nidulans).